The primary structure comprises 195 residues: CD70 antigen (195 aa).

Residues 1-23 lie on the Cytoplasmic side of the membrane; sequence MPEEGRPCPWVRWSGTAFQRQWP. A helical; Signal-anchor for type II membrane protein membrane pass occupies residues 24–44; that stretch reads WLLLVVFITVFCCWFHCSGLL. Residues 45–195 lie on the Extracellular side of the membrane; sequence SKQQQRLLEH…TFFGVQWICP (151 aa). In terms of domain architecture, THD spans 58–193; sequence HTAELQLNLT…DETFFGVQWI (136 aa). N-linked (GlcNAc...) asparagine glycans are attached at residues Asn-65 and Asn-116. 2 cysteine pairs are disulfide-bonded: Cys-117-Cys-153 and Cys-135-Cys-170. Residue Asn-172 is glycosylated (N-linked (GlcNAc...) asparagine).

It belongs to the tumor necrosis factor family. Homotrimer. N-glycosylated. Very low level of expression. Detected in splenocytes and thymocytes.

It is found in the cell membrane. Functionally, expressed at the plasma membrane of B cells, it is the ligand of the CD27 receptor which is specifically expressed at the surface of T cells. The CD70-CD27 signaling pathway mediates antigen-specific T cell activation and expansion which in turn provides immune surveillance of B cells. The polypeptide is CD70 antigen (Mus musculus (Mouse)).